The following is a 458-amino-acid chain: Cell death abnormality protein 8 (458 aa).

Residues 1–45 (MFLKKHKSKLLLVPRDEEQEDAGIVAVLTDRIPSVLLVRWFDLFC) are Cytoplasmic-facing. The helical transmembrane segment at 46–66 (FGFAMCSYALDFFSDIGIAIF) threads the bilayer. The Extracellular portion of the chain corresponds to 67 to 77 (HFWAGRYLSGS). A helical membrane pass occupies residues 78 to 98 (LVLAFALLPSVIINIISMVWM). Residues 99–123 (LDDEMHWKRRAHPRRTGTFELNQKR) lie on the Cytoplasmic side of the membrane. A helical transmembrane segment spans residues 124-144 (FIPLSKMIVLCICQMGPLFWY). Topologically, residues 145–219 (YKALYYGWMF…YYQTGTYPYW (75 aa)) are extracellular. The chain crosses the membrane as a helical span at residues 220 to 240 (LYFQAASLLLSIISISWSVVV). Topologically, residues 241–274 (QNRSLRMIRDDKVNIWPHEAVLQFCWRFLTILAR) are cytoplasmic. 2 consecutive transmembrane segments (helical) span residues 275-295 (IITL…LISV) and 296-316 (HLLV…DACT). A topological domain (extracellular) is located at residue histidine 317. The helical transmembrane segment at 318 to 338 (IEKLLLLINTFIHIFIPFNMV) threads the bilayer. Over 339–353 (EGNTRWRYLTAYSVE) the chain is Cytoplasmic. The chain crosses the membrane as a helical span at residues 354-374 (FIEMMLVCWLLPLSLNTFPYI). Over 375–378 (EKVQ) the chain is Extracellular. A helical transmembrane segment spans residues 379–399 (VGVPISFIAGIAIMMMYYQFF). At 400–458 (HPNRRQLIVTQSQEDLSLNVQKSVETLTPKLESSLEISGEQNTSQDLVSELLLDVEHEN) the chain is on the cytoplasmic side.

It belongs to the XK family. Cleavage by ced-3 activates ced-8 function in promoting phosphatidylserine exposure at the surface of apoptotic cells.

It is found in the cell membrane. The catalysed reaction is a 1,2-diacyl-sn-glycero-3-phospho-L-serine(in) = a 1,2-diacyl-sn-glycero-3-phospho-L-serine(out). Phospholipid scramblase that acts downstream of ced-9 and caspase ced-3 to promote phosphatidylserine exposure on apoptotic cell surface. Phosphatidylserine is a specific marker only present at the surface of apoptotic cells and acts as a specific signal for engulfment. Regulates apoptosis kinetics during embryonic development. Not required for engulfment of germ cell corpses. The polypeptide is Cell death abnormality protein 8 (Caenorhabditis elegans).